Here is a 214-residue protein sequence, read N- to C-terminus: Thymidylate kinase (214 aa).

10–17 (GGEGAGKS) contacts ATP.

Belongs to the thymidylate kinase family.

The catalysed reaction is dTMP + ATP = dTDP + ADP. In terms of biological role, phosphorylation of dTMP to form dTDP in both de novo and salvage pathways of dTTP synthesis. This Brucella canis (strain ATCC 23365 / NCTC 10854 / RM-666) protein is Thymidylate kinase.